A 240-amino-acid polypeptide reads, in one-letter code: MTRGAIHNRDAFLEHIAHRLGRAPRLSGVSRPQWSNQPQWKVLAGYSQDDLLNVLQKQCGLIHTDYIETTSAELAGALRRQVAAYGGGPVIVPDDPRFAEYGLSALLRDEWPAEQTTVHIWNPALGRQNIDAAEQANVGIAFSDITLAESGTVVLFSRNEQGRAIHFLPKTYIAIVPKSTVVPRMTQAAAVIHEQIEKGGLVPSCINFITGPSNSADIEMNLVVGVHGPMKAAYIVVTDR.

The protein belongs to the LutC/YkgG family.

Is involved in L-lactate degradation and allows cells to grow with lactate as the sole carbon source. This chain is Lactate utilization protein C, found in Geobacillus kaustophilus (strain HTA426).